A 487-amino-acid polypeptide reads, in one-letter code: E3 ubiquitin-protein ligase TRIM50 (487 aa).

The RING-type zinc finger occupies 16 to 57; the sequence is CPICLEVFKEPLMLQCGHSYCKGCLVSLSCHLDAELRCPVCR. The B box-type zinc-finger motif lies at 84–125; that stretch reads PEPKVCVHHRNPLSLFCEKDQELICGLCGLLGSHQHHPVTPV. The Zn(2+) site is built by Cys-89, His-92, Cys-111, and His-117. Coiled coils occupy residues 125–169 and 204–235; these read VSTV…NESD and LVAS…FGNE. The region spanning 276–475 is the B30.2/SPRY domain; sequence DIKLTVWKRL…LPMVLPPPSG (200 aa). Position 373 is an N6-acetyllysine (Lys-373). Positions 468–487 are disordered; that stretch reads MVLPPPSGPGPLSPEQPTKL. Residues 469-481 are compositionally biased toward pro residues; sequence VLPPPSGPGPLSP.

The protein belongs to the TRIM/RBCC family. In terms of assembly, can form dimers and trimers. Interacts with several E2 ubiquitin-conjugating enzymes, including UBE2L6, UBE2E1, UBE2E3. No interaction with UBE2H. Interacts with BECN1. Interacts with SQSTM1. Interacts with NLRP3. Post-translationally, auto-ubiquitinated. In terms of processing, acetylated by EP300 and KAT2B. HDAC6 drives TRIM50 deacetylation. Acetylation antagonizes with TRIM50 ubiquitination.

The protein localises to the cytoplasm. It carries out the reaction S-ubiquitinyl-[E2 ubiquitin-conjugating enzyme]-L-cysteine + [acceptor protein]-L-lysine = [E2 ubiquitin-conjugating enzyme]-L-cysteine + N(6)-ubiquitinyl-[acceptor protein]-L-lysine.. Its function is as follows. E3 ubiquitin-protein ligase that ubiquitinates Beclin-1/BECN1 in a 'Lys-63'-dependent manner enhancing its binding to ULK1. In turn, promotes starvation-induced autophagy activation. Also interacts with p62/SQSTM1 protein and thereby induces the formation and the autophagy clearance of aggresome-associated polyubiquitinated proteins through HDAC6 interaction. Also promotes NLRP3 inflammasome activation by directly inducing NLRP3 oligomerization independent of its E3 ligase function. This is E3 ubiquitin-protein ligase TRIM50 from Homo sapiens (Human).